Here is a 1214-residue protein sequence, read N- to C-terminus: SWI/SNF complex subunit SMARCC2 (1214 aa).

The tract at residues 1–274 (MAVRKKDGGP…PVSRRKKISA (274 aa)) is marR-like, BRCT and chromo domains module. In terms of domain architecture, MarR-like spans 10–136 (PNVKYYEAAD…IEKSLVQNNC (127 aa)). Positions 140-183 (PNIFLCPEIEPKLLGKLKDIIKRHQGTVTEDKNNASHVVYPVPG) constitute a BRCT; N-terminus domain. The Chromo domain occupies 189–217 (EWVRPVMKRDKQVLLHWGYYPDSYDTWIP). In terms of domain architecture, BRCT; C-terminus spans 233–257 (KPRKVHAKWILDTDTFNEWMNEEDY). Residues 257 to 413 (YEVNDDKNPV…GEQTKNPDLH (157 aa)) are disordered. The segment covering 275–284 (KTLTDEVNSP) has biased composition (polar residues). 5 positions are modified to phosphoserine: S283, S286, S302, S304, and S306. K312 bears the N6-(ADP-ribosyl)lysine mark. K326 bears the N6-acetyllysine mark. Over residues 331–344 (HREEEQEDLTKDMD) the composition is skewed to basic and acidic residues. 2 positions are modified to phosphoserine: S347 and S387. Residues 379–398 (DLDEQEDESMETTGKDEDEN) are compositionally biased toward acidic residues. The SWIRM domain maps to 424–521 (IIIPSYAAWF…YQVDAESRPT (98 aa)). T548 carries the post-translational modification Phosphothreonine. Residues K564, K566, K568, and K592 each participate in a glycyl lysine isopeptide (Lys-Gly) (interchain with G-Cter in SUMO2) cross-link. One can recognise an SANT domain in the interval 596 to 647 (SATREWTEQETLLLLEALEMYKDDWNKVSEHVGSRTQDECILHFLRLPIEDP). K704 is covalently cross-linked (Glycyl lysine isopeptide (Lys-Gly) (interchain with G-Cter in SUMO2)). A disordered region spans residues 724–852 (KVTGKADPAF…GERKTKVERD (129 aa)). 2 stretches are compositionally biased toward basic and acidic residues: residues 747 to 777 (EPERIEESGNDEARVEGQATDEKKEPKEPRE) and 784 to 852 (EEAK…VERD). K787 is covalently cross-linked (Glycyl lysine isopeptide (Lys-Gly) (interchain with G-Cter in SUMO2)). S813 bears the Phosphoserine mark. Residue K848 forms a Glycyl lysine isopeptide (Lys-Gly) (interchain with G-Cter in SUMO2) linkage. The stretch at 907–934 (EELETIMDREREALEYQRQQLLADRQAF) forms a coiled coil. Disordered regions lie at residues 947-983 (RQQHFQQMHQQQQQPPPALPPGSQPIPPTGAAGPPAV), 997-1092 (PAGS…PPPP), and 1182-1214 (LPSASPLPDPGTPLPPDPTAPSPGTVTPVPPPQ). Over residues 949-959 (QHFQQMHQQQQ) the composition is skewed to low complexity. Pro residues predominate over residues 960–974 (QPPPALPPGSQPIPP). Positions 997–1033 (PAGSGAPPGSLGPSEQIGQAGSTAGPQQQQPAGAPQP) are enriched in low complexity. Pro residues-rich tracts occupy residues 1034 to 1051 (GAVPPGVPPPGPHGPSPF) and 1186 to 1202 (SPLPDPGTPLPPDPTAP).

It belongs to the SMARCC family. In terms of assembly, component of the multiprotein chromatin-remodeling complexes SWI/SNF: SWI/SNF-A (BAF), SWI/SNF-B (PBAF) and related complexes. The canonical complex contains a catalytic subunit (either SMARCA4/BRG1/BAF190A or SMARCA2/BRM/BAF190B) and at least SMARCE1, ACTL6A/BAF53, SMARCC1/BAF155, SMARCC2/BAF170, and SMARCB1/SNF5/BAF47. Other subunits specific to each of the complexes may also be present permitting several possible combinations developmentally and tissue specific. Component of the BAF complex, which includes at least actin (ACTB), ARID1A/BAF250A, ARID1B/BAF250B, SMARCA2/BRM, SMARCA4/BRG1, ACTL6A/BAF53, ACTL6B/BAF53B, SMARCE1/BAF57, SMARCC1/BAF155, SMARCC2/BAF170, SMARCB1/SNF5/INI1, and one or more SMARCD1/BAF60A, SMARCD2/BAF60B, or SMARCD3/BAF60C. In muscle cells, the BAF complex also contains DPF3. Component of neural progenitors-specific chromatin remodeling complex (npBAF complex) composed of at least, ARID1A/BAF250A or ARID1B/BAF250B, SMARCD1/BAF60A, SMARCD3/BAF60C, SMARCA2/BRM/BAF190B, SMARCA4/BRG1/BAF190A, SMARCB1/BAF47, SMARCC1/BAF155, SMARCE1/BAF57, SMARCC2/BAF170, PHF10/BAF45A, ACTL6A/BAF53A and actin. Component of neuron-specific chromatin remodeling complex (nBAF complex) composed of at least, ARID1A/BAF250A or ARID1B/BAF250B, SMARCD1/BAF60A, SMARCD3/BAF60C, SMARCA2/BRM/BAF190B, SMARCA4/BRG1/BAF190A, SMARCB1/BAF47, SMARCC1/BAF155, SMARCE1/BAF57, SMARCC2/BAF170, DPF1/BAF45B, DPF3/BAF45C, ACTL6B/BAF53B and actin. Component of the SWI/SNF-B (PBAF) chromatin remodeling complex, at least composed of SMARCA4/BRG1, SMARCB1/BAF47/SNF5, ACTL6A/BAF53A or ACTL6B/BAF53B, SMARCE1/BAF57, SMARCD1/BAF60A, SMARCD2/BAF60B, perhaps SMARCD3/BAF60C, SMARCC1/BAF155, SMARCC2/BAF170, PBRM1/BAF180, ARID2/BAF200 and actin. May also interact with the SIN3A histone deacetylase transcription repressor complex in conjunction with SMARCA2 and SMARCA4. Interacts with SMARD1. Interacts with KDM6B. Interaction with RCOR1. Interacts with DPF2. Interacts with ERCC6. Interacts with FOS. In terms of processing, mono-ADP-ribosylation at Lys-312 by SIRT6 promotes recruitment to the enhancer region of the Heme oxygenase-1 (HO-1) locus, leading to transcription activation of the locus. Ubiquitously expressed.

The protein resides in the nucleus. Functionally, involved in transcriptional activation and repression of select genes by chromatin remodeling (alteration of DNA-nucleosome topology). Component of SWI/SNF chromatin remodeling complexes that carry out key enzymatic activities, changing chromatin structure by altering DNA-histone contacts within a nucleosome in an ATP-dependent manner. Can stimulate the ATPase activity of the catalytic subunit of these complexes. May be required for CoREST dependent repression of neuronal specific gene promoters in non-neuronal cells. Belongs to the neural progenitors-specific chromatin remodeling complex (npBAF complex) and the neuron-specific chromatin remodeling complex (nBAF complex). During neural development a switch from a stem/progenitor to a postmitotic chromatin remodeling mechanism occurs as neurons exit the cell cycle and become committed to their adult state. The transition from proliferating neural stem/progenitor cells to postmitotic neurons requires a switch in subunit composition of the npBAF and nBAF complexes. As neural progenitors exit mitosis and differentiate into neurons, npBAF complexes which contain ACTL6A/BAF53A and PHF10/BAF45A, are exchanged for homologous alternative ACTL6B/BAF53B and DPF1/BAF45B or DPF3/BAF45C subunits in neuron-specific complexes (nBAF). The npBAF complex is essential for the self-renewal/proliferative capacity of the multipotent neural stem cells. The nBAF complex along with CREST plays a role regulating the activity of genes essential for dendrite growth. Critical regulator of myeloid differentiation, controlling granulocytopoiesis and the expression of genes involved in neutrophil granule formation. The polypeptide is SWI/SNF complex subunit SMARCC2 (SMARCC2) (Homo sapiens (Human)).